A 190-amino-acid polypeptide reads, in one-letter code: dTTP/UTP pyrophosphatase (190 aa).

Residue Asp-71 is the Proton acceptor of the active site.

It belongs to the Maf family. YhdE subfamily. A divalent metal cation serves as cofactor.

Its subcellular location is the cytoplasm. It carries out the reaction dTTP + H2O = dTMP + diphosphate + H(+). The catalysed reaction is UTP + H2O = UMP + diphosphate + H(+). Functionally, nucleoside triphosphate pyrophosphatase that hydrolyzes dTTP and UTP. May have a dual role in cell division arrest and in preventing the incorporation of modified nucleotides into cellular nucleic acids. In Xanthomonas euvesicatoria pv. vesicatoria (strain 85-10) (Xanthomonas campestris pv. vesicatoria), this protein is dTTP/UTP pyrophosphatase.